The chain runs to 546 residues: Oncoprotein-induced transcript 3 protein (546 aa).

An N-terminal signal peptide occupies residues 1-16 (MPLSLLLACLFTTVTL). Residues N89 and N116 are each glycosylated (N-linked (GlcNAc...) asparagine). An EGF-like; calcium-binding domain is found at 182-222 (DENECEHNNGGCSEICVNLKNSHRCACGVGRVLRSDGKTCE). Intrachain disulfides connect C186/C197, C193/C206, and C208/C221. One can recognise a ZP domain in the interval 261-516 (TCQVPVLCKS…SRCAQGCHRR (256 aa)). N299 carries an N-linked (GlcNAc...) asparagine glycan. A disordered region spans residues 524 to 546 (DEDSAGLQSQTLTGGPISIDWEE).

It localises to the nucleus envelope. In terms of biological role, may be involved in hepatocellular function and development. The protein is Oncoprotein-induced transcript 3 protein (Oit3) of Rattus norvegicus (Rat).